The chain runs to 802 residues: Mitochondrial inner membrane m-AAA protease component AFG3L2 (802 aa).

The N-terminal 38 residues, 1 to 38, are a transit peptide targeting the mitochondrion; the sequence is MAHRCLLLWSRGGCRRGLPPLLVPRGCLGPDRRPCLRT. Positions 39 to 66 are cleaved as a propeptide — removed in mature form; the sequence is LYQYATVQTASSRRSLLRDVIAAYQRFC. Positions 76–124 are disordered; the sequence is YFPNGKNGKKASEPKEAVGEKKEPQPSGPQPSGGAGGGGGKRRGKKEDS. Basic and acidic residues predominate over residues 85–99; the sequence is KASEPKEAVGEKKEP. Lysine 116 is modified (N6-succinyllysine). 2 helical membrane-spanning segments follow: residues 142–162 and 250–270; these read FRMY…YFVF and GSFL…LYTI. Valine 309, alanine 310, threonine 351, glycine 352, lysine 353, threonine 354, leucine 355, and histidine 489 together coordinate ATP. Histidine 573 is a binding site for Zn(2+). Residue glutamate 574 is part of the active site. Zn(2+) contacts are provided by histidine 577 and aspartate 648. The interval 759 to 802 is disordered; it reads VEGTGSLDEDTSLPEGLQDWNKEREKEEKKEKEKEEPLNEKVVS. The span at 778 to 802 shows a compositional bias: basic and acidic residues; the sequence is WNKEREKEEKKEKEKEEPLNEKVVS.

The protein in the N-terminal section; belongs to the AAA ATPase family. In the C-terminal section; belongs to the peptidase M41 family. Homohexamer. Forms heterohexamers with SPG7 and AFG3L1. The m-AAA protease is either composed of homohexamers of AFG3L2 or heterohexamers of AFG3L1, AFG3L2 and/or SPG7. Interacts with MAIP1. Interacts with DNAJC19. Interacts with PHB2. Requires Zn(2+) as cofactor. Post-translationally, upon import into the mitochondrion, the N-terminal transit peptide is cleaved to generate an intermediate form which undergoes autocatalytic proteolytic processing to generate the proteolytically active mature form. In terms of tissue distribution, highly expressed in the cerebellar Purkinje cells.

It localises to the mitochondrion inner membrane. It carries out the reaction ATP + H2O = ADP + phosphate + H(+). In terms of biological role, catalytic component of the m-AAA protease, a protease that plays a key role in proteostasis of inner mitochondrial membrane proteins, and which is essential for axonal and neuron development. AFG3L2 possesses both ATPase and protease activities: the ATPase activity is required to unfold substrates, threading them into the internal proteolytic cavity for hydrolysis into small peptide fragments. The m-AAA protease carries out protein quality control in the inner membrane of the mitochondria by mediating degradation of mistranslated or misfolded polypeptides. The m-AAA protease complex also promotes the processing and maturation of mitochondrial proteins, such as MRPL32/bL32m, PINK1 and SP7. Mediates protein maturation of the mitochondrial ribosomal subunit MRPL32/bL32m by catalyzing the cleavage of the presequence of MRPL32/bL32m prior to assembly into the mitochondrial ribosome. Required for SPG7 maturation into its active mature form after SPG7 cleavage by mitochondrial-processing peptidase (MPP). Required for the maturation of PINK1 into its 52kDa mature form after its cleavage by mitochondrial-processing peptidase (MPP). Acts as a regulator of calcium in neurons by mediating degradation of SMDT1/EMRE before its assembly with the uniporter complex, limiting the availability of SMDT1/EMRE for MCU assembly and promoting efficient assembly of gatekeeper subunits with MCU. Promotes the proteolytic degradation of GHITM upon hyperpolarization of mitochondria: progressive GHITM degradation leads to respiratory complex I degradation and broad reshaping of the mitochondrial proteome by AFG3L2. Also acts as a regulator of mitochondrial glutathione homeostasis by mediating cleavage and degradation of SLC25A39. SLC25A39 cleavage is prevented when SLC25A39 binds iron-sulfur. Involved in the regulation of OMA1-dependent processing of OPA1. May act by mediating processing of OMA1 precursor, participating in OMA1 maturation. The polypeptide is Mitochondrial inner membrane m-AAA protease component AFG3L2 (Mus musculus (Mouse)).